A 208-amino-acid chain; its full sequence is Imidazoleglycerol-phosphate dehydratase (208 aa).

The disordered stretch occupies residues 1–22 (MTEDTETSSTGAGADDRTAAIS).

The protein belongs to the imidazoleglycerol-phosphate dehydratase family.

The protein localises to the cytoplasm. It carries out the reaction D-erythro-1-(imidazol-4-yl)glycerol 3-phosphate = 3-(imidazol-4-yl)-2-oxopropyl phosphate + H2O. Its pathway is amino-acid biosynthesis; L-histidine biosynthesis; L-histidine from 5-phospho-alpha-D-ribose 1-diphosphate: step 6/9. The protein is Imidazoleglycerol-phosphate dehydratase of Haloquadratum walsbyi (strain DSM 16790 / HBSQ001).